A 70-amino-acid polypeptide reads, in one-letter code: DNA gyrase inhibitor YacG (70 aa).

Positions 21, 24, 36, and 40 each coordinate Zn(2+).

It belongs to the DNA gyrase inhibitor YacG family. Interacts with GyrB. It depends on Zn(2+) as a cofactor.

Inhibits all the catalytic activities of DNA gyrase by preventing its interaction with DNA. Acts by binding directly to the C-terminal domain of GyrB, which probably disrupts DNA binding by the gyrase. This Rhizobium meliloti (strain 1021) (Ensifer meliloti) protein is DNA gyrase inhibitor YacG.